The sequence spans 175 residues: Ferritin light chain (175 aa).

The residue at position 2 (serine 2) is an N-acetylserine. Positions 7–156 (QNYSTEVEAA…DHLTNLRRLA (150 aa)) constitute a Ferritin-like diiron domain. Residues glutamate 54, glutamate 58, glutamate 61, and glutamate 64 each contribute to the Fe cation site.

This sequence belongs to the ferritin family. In terms of assembly, oligomer of 24 subunits. There are two types of subunits: L (light) chain and H (heavy) chain. The major chain can be light or heavy, depending on the species and tissue type. The functional molecule forms a roughly spherical shell with a diameter of 12 nm and contains a central cavity into which the insoluble mineral iron core is deposited. Interacts with NCOA4.

The protein localises to the cytoplasmic vesicle. Its subcellular location is the autophagosome. The protein resides in the cytoplasm. It is found in the autolysosome. Stores iron in a soluble, non-toxic, readily available form. Important for iron homeostasis. Iron is taken up in the ferrous form and deposited as ferric hydroxides after oxidation. Also plays a role in delivery of iron to cells. Mediates iron uptake in capsule cells of the developing kidney. Delivery to lysosomes by the cargo receptor NCOA4 for autophagic degradation and release or iron. The polypeptide is Ferritin light chain (FTL) (Bos taurus (Bovine)).